The chain runs to 66 residues: FMRFamide-like neuropeptides 24 (66 aa).

The first 22 residues, 1 to 22 (MSRTSIILVLAIFVAIAAIAQC), serve as a signal peptide directing secretion. Positions 23 to 48 (RNIQYDVDEISPEAAFRYAQWGEIPH) are excised as a propeptide. F61 is subject to Phenylalanine amide. Positions 65–66 (SV) are excised as a propeptide.

It belongs to the FARP (FMRFamide related peptide) family.

It localises to the secreted. In terms of biological role, FMRFamides and FMRFamide-like peptides are neuropeptides. This chain is FMRFamide-like neuropeptides 24, found in Caenorhabditis briggsae.